The following is a 648-amino-acid chain: Threonine--tRNA ligase (648 aa).

A TGS domain is found at 1–61 (MIDIILPDGS…INTATVKAIT (61 aa)). Residues 243-549 (DHRKLGRELE…LIEHYSGRLP (307 aa)) form a catalytic region. Zn(2+)-binding residues include cysteine 349, histidine 400, and histidine 526.

Belongs to the class-II aminoacyl-tRNA synthetase family. Homodimer. It depends on Zn(2+) as a cofactor.

The protein resides in the cytoplasm. It carries out the reaction tRNA(Thr) + L-threonine + ATP = L-threonyl-tRNA(Thr) + AMP + diphosphate + H(+). In terms of biological role, catalyzes the attachment of threonine to tRNA(Thr) in a two-step reaction: L-threonine is first activated by ATP to form Thr-AMP and then transferred to the acceptor end of tRNA(Thr). Also edits incorrectly charged L-seryl-tRNA(Thr). The sequence is that of Threonine--tRNA ligase from Orientia tsutsugamushi (strain Boryong) (Rickettsia tsutsugamushi).